Reading from the N-terminus, the 259-residue chain is MSVSVIVMGAGGRMGTTITGMVRADGECRLAGVVEREGRREGLEHLGCQVAGTLEELLPGMPDAVVIDFTAPEASVHNARACARHGSGLVIGTTGFTEEQKAELADCALQTPVFWAPNMSVGVNVLLKILPQLVTLLGEQYDLEMVELHHNKKKDSPSGTALRLAECLAEARKWDLDTVANYHREGIIGERPHEEIGIQTIRGGDVVGVHTVYALGPGERIEVTHQAHSRETFAAGAIRAAKWLAQNRPGKLYTMSDML.

Residues 9 to 14 (GAGGRM) and glutamate 35 each bind NAD(+). Arginine 36 contributes to the NADP(+) binding site. NAD(+) contacts are provided by residues 92–94 (GTT) and 116–119 (APNM). Histidine 149 (proton donor/acceptor) is an active-site residue. Histidine 150 serves as a coordination point for (S)-2,3,4,5-tetrahydrodipicolinate. Residue lysine 153 is the Proton donor of the active site. 159-160 (GT) serves as a coordination point for (S)-2,3,4,5-tetrahydrodipicolinate.

Belongs to the DapB family.

The protein localises to the cytoplasm. The enzyme catalyses (S)-2,3,4,5-tetrahydrodipicolinate + NAD(+) + H2O = (2S,4S)-4-hydroxy-2,3,4,5-tetrahydrodipicolinate + NADH + H(+). It catalyses the reaction (S)-2,3,4,5-tetrahydrodipicolinate + NADP(+) + H2O = (2S,4S)-4-hydroxy-2,3,4,5-tetrahydrodipicolinate + NADPH + H(+). Its pathway is amino-acid biosynthesis; L-lysine biosynthesis via DAP pathway; (S)-tetrahydrodipicolinate from L-aspartate: step 4/4. In terms of biological role, catalyzes the conversion of 4-hydroxy-tetrahydrodipicolinate (HTPA) to tetrahydrodipicolinate. This is 4-hydroxy-tetrahydrodipicolinate reductase from Oleidesulfovibrio alaskensis (strain ATCC BAA-1058 / DSM 17464 / G20) (Desulfovibrio alaskensis).